The primary structure comprises 686 residues: Putative cuticle collagen 99 (686 aa).

Disordered regions lie at residues 42-79 (PPIGNSDDNSDDVAKSRKVRNSCMCPPGPPGERGPVGP) and 163-444 (GPIG…SLVA). Residues 67-79 (PPGPPGERGPVGP) show a composition bias toward pro residues. 3 triple-helical region regions span residues 142 to 201 (GMPG…KGDR), 230 to 263 (GPPGPPGPPGPPGPAGRDGRHGMKGDRGLPGFDG), and 268 to 296 (GPKGETGNPGRDGIPGARGPPGERGEKGD). Residues 231–243 (PPGPPGPPGPPGP) show a composition bias toward pro residues. A compositionally biased stretch (basic and acidic residues) spans 246-256 (RDGRHGMKGDR). Positions 306–318 (GQSVSTVSSSGSQ) are enriched in low complexity. Composition is skewed to basic and acidic residues over residues 361-373 (EKGERGERGETGD) and 401-417 (RDGRPGEKGEKGEHGLR). Positions 394–439 (GPPGPPGRDGRPGEKGEKGEHGLRGDMGLPGPEGTPGKRGRRGRHG) are triple-helical region. 2 N-linked (GlcNAc...) asparagine glycosylation sites follow: Asn-446 and Asn-535. Residues 475 to 650 (KNVIPGPPGP…TGPDGLPLPY (176 aa)) form a disordered region. Triple-helical region regions lie at residues 479–536 (PGPP…SGNQ), 538–576 (GPRGPPGLPGPPGEKGDLGPPGLPGQPGALGLPGHPGPM), and 577–636 (GLRG…PGLD). Pro residues predominate over residues 540–549 (RGPPGLPGPP). Low complexity predominate over residues 563 to 581 (QPGALGLPGHPGPMGLRGP).

Belongs to the cuticular collagen family. Collagen polypeptide chains are complexed within the cuticle by disulfide bonds and other types of covalent cross-links.

Functionally, nematode cuticles are composed largely of collagen-like proteins. The cuticle functions both as an exoskeleton and as a barrier to protect the worm from its environment. This chain is Putative cuticle collagen 99, found in Caenorhabditis briggsae.